The sequence spans 95 residues: Co-chaperonin GroES (95 aa).

This sequence belongs to the GroES chaperonin family. Heptamer of 7 subunits arranged in a ring. Interacts with the chaperonin GroEL.

The protein resides in the cytoplasm. Together with the chaperonin GroEL, plays an essential role in assisting protein folding. The GroEL-GroES system forms a nano-cage that allows encapsulation of the non-native substrate proteins and provides a physical environment optimized to promote and accelerate protein folding. GroES binds to the apical surface of the GroEL ring, thereby capping the opening of the GroEL channel. The polypeptide is Co-chaperonin GroES (Marinobacter nauticus (strain ATCC 700491 / DSM 11845 / VT8) (Marinobacter aquaeolei)).